Here is a 141-residue protein sequence, read N- to C-terminus: Nucleoside diphosphate kinase (141 aa).

ATP-binding residues include lysine 11, phenylalanine 59, arginine 87, threonine 93, arginine 104, and asparagine 114. Catalysis depends on histidine 117, which acts as the Pros-phosphohistidine intermediate.

This sequence belongs to the NDK family. Homotetramer. It depends on Mg(2+) as a cofactor.

It localises to the cytoplasm. The catalysed reaction is a 2'-deoxyribonucleoside 5'-diphosphate + ATP = a 2'-deoxyribonucleoside 5'-triphosphate + ADP. The enzyme catalyses a ribonucleoside 5'-diphosphate + ATP = a ribonucleoside 5'-triphosphate + ADP. Functionally, major role in the synthesis of nucleoside triphosphates other than ATP. The ATP gamma phosphate is transferred to the NDP beta phosphate via a ping-pong mechanism, using a phosphorylated active-site intermediate. In Burkholderia thailandensis (strain ATCC 700388 / DSM 13276 / CCUG 48851 / CIP 106301 / E264), this protein is Nucleoside diphosphate kinase.